Consider the following 327-residue polypeptide: Tetraacyldisaccharide 4'-kinase (327 aa).

52-59 (TLGGAGKT) is a binding site for ATP.

The protein belongs to the LpxK family.

The enzyme catalyses a lipid A disaccharide + ATP = a lipid IVA + ADP + H(+). The protein operates within glycolipid biosynthesis; lipid IV(A) biosynthesis; lipid IV(A) from (3R)-3-hydroxytetradecanoyl-[acyl-carrier-protein] and UDP-N-acetyl-alpha-D-glucosamine: step 6/6. Transfers the gamma-phosphate of ATP to the 4'-position of a tetraacyldisaccharide 1-phosphate intermediate (termed DS-1-P) to form tetraacyldisaccharide 1,4'-bis-phosphate (lipid IVA). The protein is Tetraacyldisaccharide 4'-kinase of Methylorubrum populi (strain ATCC BAA-705 / NCIMB 13946 / BJ001) (Methylobacterium populi).